A 419-amino-acid chain; its full sequence is Inositol-tetrakisphosphate 1-kinase (419 aa).

1D-myo-inositol 1,3,4-trisphosphate is bound at residue Lys-18. Arg-106 and Lys-157 together coordinate ATP. The ATP-grasp domain maps to 117–325 (EAYMKDDRIC…IASVLQGQSS (209 aa)). 1D-myo-inositol 1,3,4-trisphosphate contacts are provided by His-167 and Lys-199. ATP contacts are provided by residues 188-199 (QNFINHNAVLYK), Ser-214, Ser-232, and Ser-236. Mg(2+)-binding residues include Asp-281, Asp-295, and Asn-297. 1D-myo-inositol 1,3,4-trisphosphate is bound at residue Asn-297. At Lys-388 the chain carries N6-acetyllysine; by EP300 and CREBBP. At Ser-401 the chain carries Phosphoserine. The residue at position 415 (Lys-415) is an N6-acetyllysine; by EP300 and CREBBP.

Belongs to the ITPK1 family. As to quaternary structure, monomer. Interacts with GPS1/COPS1. Mg(2+) is required as a cofactor. Acetylation by EP300 and CREBBP destabilizes ITPK1, and down-regulates enzymatic activity. Deacetylated by SIRT1.

The catalysed reaction is 1D-myo-inositol 3,4,5,6-tetrakisphosphate + ATP = 1D-myo-inositol 1,3,4,5,6-pentakisphosphate + ADP + H(+). The enzyme catalyses 1D-myo-inositol 1,3,4-trisphosphate + ATP = 1D-myo-inositol 1,3,4,5-tetrakisphosphate + ADP + H(+). It carries out the reaction 1D-myo-inositol 1,3,4-trisphosphate + ATP = 1D-myo-inositol 1,3,4,6-tetrakisphosphate + ADP + H(+). It catalyses the reaction 1D-myo-inositol 3,4,6-trisphosphate + ATP = 1D-myo-inositol 1,3,4,6-tetrakisphosphate + ADP + H(+). The catalysed reaction is 1D-myo-inositol 1,3,4-trisphosphate + 1D-myo-inositol 1,3,4,5,6-pentakisphosphate = 1D-myo-inositol 3,4,5,6-tetrakisphosphate + 1D-myo-inositol 1,3,4,6-tetrakisphosphate. The enzyme catalyses 1D-myo-inositol 1,3,4-trisphosphate + 1D-myo-inositol 1,3,4,5,6-pentakisphosphate = 1D-myo-inositol 3,4,5,6-tetrakisphosphate + 1D-myo-inositol 1,3,4,5-tetrakisphosphate. Functionally, kinase that can phosphorylate various inositol polyphosphate such as Ins(3,4,5,6)P4 or Ins(1,3,4)P3. Phosphorylates Ins(3,4,5,6)P4 at position 1 to form Ins(1,3,4,5,6)P5. This reaction is thought to have regulatory importance, since Ins(3,4,5,6)P4 is an inhibitor of plasma membrane Ca(2+)-activated Cl(-) channels, while Ins(1,3,4,5,6)P5 is not. Also phosphorylates Ins(1,3,4)P3 on O-5 and O-6 to form Ins(1,3,4,6)P4, an essential molecule in the hexakisphosphate (InsP6) pathway. Also acts as an inositol polyphosphate phosphatase that dephosphorylates Ins(1,3,4,5)P4 and Ins(1,3,4,6)P4 to Ins(1,3,4)P3, and Ins(1,3,4,5,6)P5 to Ins(3,4,5,6)P4. May also act as an isomerase that interconverts the inositol tetrakisphosphate isomers Ins(1,3,4,5)P4 and Ins(1,3,4,6)P4 in the presence of ADP and magnesium. Probably acts as the rate-limiting enzyme of the InsP6 pathway. Modifies TNF-alpha-induced apoptosis by interfering with the activation of TNFRSF1A-associated death domain. Plays an important role in MLKL-mediated necroptosis. Produces highly phosphorylated inositol phosphates such as inositolhexakisphosphate (InsP6) which bind to MLKL mediating the release of an N-terminal auto-inhibitory region leading to its activation. Essential for activated phospho-MLKL to oligomerize and localize to the cell membrane during necroptosis. The sequence is that of Inositol-tetrakisphosphate 1-kinase (ITPK1) from Bos taurus (Bovine).